We begin with the raw amino-acid sequence, 92 residues long: LYR motif-containing protein 4 homolog (92 aa).

A coiled-coil region spans residues 48-68 (AEIDRQMAEGQQNLELIRRQV).

The protein belongs to the complex I LYR family. Component of the mitochondrial core iron-sulfur cluster (ISC) assembly complex at least composed of the cysteine desulfurase Nfs1, the scaffold protein IscU, the accessory protein bcn92/Isd11/Lyrm4, and probably fh/frataxin. Interacts with Nfs1.

Its subcellular location is the mitochondrion. Its function is as follows. Stabilizing factor of the core iron-sulfur cluster (ISC) assembly complex that regulates the stability and cysteine desulfurase activity of Nfs1 and participates in the [2Fe-2S] clusters assembly on the scaffolding protein IscU. The sequence is that of LYR motif-containing protein 4 homolog from Drosophila melanogaster (Fruit fly).